Here is a 649-residue protein sequence, read N- to C-terminus: Drebrin (649 aa).

Residue Ala2 is modified to N-acetylalanine. An ADF-H domain is found at 3 to 134 (GVSFSGHRLE…DAGAIGQRLS (132 aa)). Ser141 and Ser142 each carry phosphoserine. Composition is skewed to basic and acidic residues over residues 208-236 (QERM…EEHR) and 288-298 (DNPREFFKQQE). Disordered stretches follow at residues 208-420 (QERM…PAED), 477-502 (DLWP…PSGT), and 538-620 (EPPA…PPPV). 2 positions are modified to phosphothreonine: Thr331 and Thr335. Residues 334-348 (PTRSPSDSSTASTPV) show a composition bias toward polar residues. 3 positions are modified to phosphoserine: Ser337, Ser339, and Ser345. Thr346 bears the Phosphothreonine mark. Positions 363–374 (QPPPLPPPPPPA) are enriched in pro residues. At Ser416 the chain carries Phosphoserine. At Thr497 the chain carries Phosphothreonine. Residues 582-594 (NGETTQKEGTQAS) are compositionally biased toward polar residues. At Ser601 the chain carries Phosphoserine.

As to quaternary structure, interacts with RUFY3. Interacts with CXCR4; this interaction is enhanced by antigenic stimulation. Interacts (via ADF-H domain) with ZMYND8 (via N-terminus); the interaction leads to sequestering of ZMYND8 in the cytoplasm. In terms of tissue distribution, expressed in the brain, with expression in the molecular layer of the dentate gyrus, stratum pyramidale, and stratum radiatum of the hippocampus (at protein level). Also expressed in the terminal varicosities distributed along dendritic trees of pyramidal cells in CA4 and CA3 of the hippocampus (at protein level). Expressed in pyramidal cells in CA2, CA1 and the subiculum of the hippocampus (at protein level). Expressed in peripheral blood lymphocytes, including T-cells (at protein level). Expressed in the brain. Expressed in the heart, placenta, lung, skeletal muscle, kidney, pancreas, skin fibroblasts, gingival fibroblasts and bone-derived cells.

It is found in the cytoplasm. Its subcellular location is the cell projection. It localises to the dendrite. The protein localises to the cell cortex. The protein resides in the cell junction. It is found in the growth cone. Actin cytoskeleton-organizing protein that plays a role in the formation of cell projections. Required for actin polymerization at immunological synapses (IS) and for the recruitment of the chemokine receptor CXCR4 to IS. Plays a role in dendritic spine morphogenesis and organization, including the localization of the dopamine receptor DRD1 to the dendritic spines. Involved in memory-related synaptic plasticity in the hippocampus. This chain is Drebrin (DBN1), found in Homo sapiens (Human).